The sequence spans 273 residues: Shikimate kinase (273 aa).

ATP is bound at residue 85-95 (PVGKGLKSSSA).

It belongs to the GHMP kinase family. Archaeal shikimate kinase subfamily.

It is found in the cytoplasm. It carries out the reaction shikimate + ATP = 3-phosphoshikimate + ADP + H(+). The protein operates within metabolic intermediate biosynthesis; chorismate biosynthesis; chorismate from D-erythrose 4-phosphate and phosphoenolpyruvate: step 5/7. The sequence is that of Shikimate kinase from Pyrococcus furiosus (strain ATCC 43587 / DSM 3638 / JCM 8422 / Vc1).